We begin with the raw amino-acid sequence, 251 residues long: CDP-diacylglycerol pyrophosphatase (251 aa).

The helical transmembrane segment at 4 to 24 threads the bilayer; that stretch reads AGLLFLVMIVIAVVAAGIGYW.

The protein belongs to the Cdh family.

The protein localises to the cell inner membrane. The catalysed reaction is a CDP-1,2-diacyl-sn-glycerol + H2O = a 1,2-diacyl-sn-glycero-3-phosphate + CMP + 2 H(+). It functions in the pathway phospholipid metabolism; CDP-diacylglycerol degradation; phosphatidate from CDP-diacylglycerol: step 1/1. The chain is CDP-diacylglycerol pyrophosphatase from Escherichia coli O127:H6 (strain E2348/69 / EPEC).